Consider the following 717-residue polypeptide: Ribosomal RNA large subunit methyltransferase K/L (717 aa).

The THUMP domain maps to 43–154 (IGYKACLWSR…KGKANITLDL (112 aa)).

This sequence belongs to the methyltransferase superfamily. RlmKL family.

Its subcellular location is the cytoplasm. The enzyme catalyses guanosine(2445) in 23S rRNA + S-adenosyl-L-methionine = N(2)-methylguanosine(2445) in 23S rRNA + S-adenosyl-L-homocysteine + H(+). The catalysed reaction is guanosine(2069) in 23S rRNA + S-adenosyl-L-methionine = N(2)-methylguanosine(2069) in 23S rRNA + S-adenosyl-L-homocysteine + H(+). In terms of biological role, specifically methylates the guanine in position 2445 (m2G2445) and the guanine in position 2069 (m7G2069) of 23S rRNA. This chain is Ribosomal RNA large subunit methyltransferase K/L, found in Aeromonas hydrophila subsp. hydrophila (strain ATCC 7966 / DSM 30187 / BCRC 13018 / CCUG 14551 / JCM 1027 / KCTC 2358 / NCIMB 9240 / NCTC 8049).